Consider the following 132-residue polypeptide: Histone H2A-alpha (132 aa).

Ser2 carries the post-translational modification N-acetylserine. N6-acetyllysine occurs at positions 5 and 9. Residue Gln106 is modified to N5-methylglutamine. Ser129 carries the phosphoserine modification. Residues 129–130 (SQ) carry the [ST]-Q motif motif.

The protein belongs to the histone H2A family. As to quaternary structure, the nucleosome is a histone octamer containing two molecules each of H2A, H2B, H3 and H4 assembled in one H3-H4 heterotetramer and two H2A-H2B heterodimers. The octamer wraps approximately 147 bp of DNA. Interacts with mdb1 (via BRCT domain) in vitro; this interaction requires phosphorylation of this protein at the S/T-Q motif. Phosphorylated to form H2AS128ph (gamma-H2A) in response to DNA double-strand breaks (DSBs) generated by exogenous genotoxic agents and by stalled replication forks. Phosphorylation is dependent on the DNA damage checkpoint kinases rad3/ATR and tel1/ATM, spreads on either side of a detected DSB site and may mark the surrounding chromatin for recruitment of proteins required for DNA damage signaling and repair. Gamma-H2A is required for recruiting crb2, a modulator of DNA damage checkpoint signaling, to DSB sites. Gamma-H2A is removed from the DNA prior to the strand invasion-primer extension step of the repair process and subsequently dephosphorylated. Dephosphorylation is necessary for efficient recovery from the DNA damage checkpoint. Post-translationally, acetylated by esa1 to form H2AK4ac and H2AK7ac.

The protein localises to the nucleus. It localises to the chromosome. In terms of biological role, core component of nucleosome which plays a central role in DNA double strand break (DSB) repair. Nucleosomes wrap and compact DNA into chromatin, limiting DNA accessibility to the cellular machineries which require DNA as a template. Histones thereby play a central role in transcription regulation, DNA repair, DNA replication and chromosomal stability. DNA accessibility is regulated via a complex set of post-translational modifications of histones, also called histone code, and nucleosome remodeling. This chain is Histone H2A-alpha (hta1), found in Schizosaccharomyces pombe (strain 972 / ATCC 24843) (Fission yeast).